The sequence spans 249 residues: Diaminopimelate epimerase (249 aa).

Substrate-binding residues include N11 and N60. C69 functions as the Proton donor in the catalytic mechanism. Substrate is bound by residues G70 to N71, N164, and E182 to R183. C192 (proton acceptor) is an active-site residue. G193–T194 is a binding site for substrate.

This sequence belongs to the diaminopimelate epimerase family. In terms of assembly, homodimer.

The protein resides in the cytoplasm. It carries out the reaction (2S,6S)-2,6-diaminopimelate = meso-2,6-diaminopimelate. Its pathway is amino-acid biosynthesis; L-lysine biosynthesis via DAP pathway; DL-2,6-diaminopimelate from LL-2,6-diaminopimelate: step 1/1. Its function is as follows. Catalyzes the stereoinversion of LL-2,6-diaminopimelate (L,L-DAP) to meso-diaminopimelate (meso-DAP), a precursor of L-lysine and an essential component of the bacterial peptidoglycan. The chain is Diaminopimelate epimerase from Campylobacter jejuni (strain RM1221).